A 320-amino-acid polypeptide reads, in one-letter code: Ferrochelatase (320 aa).

Fe cation-binding residues include histidine 194 and glutamate 275.

It belongs to the ferrochelatase family.

Its subcellular location is the cytoplasm. The catalysed reaction is heme b + 2 H(+) = protoporphyrin IX + Fe(2+). It functions in the pathway porphyrin-containing compound metabolism; protoheme biosynthesis; protoheme from protoporphyrin-IX: step 1/1. Its function is as follows. Catalyzes the ferrous insertion into protoporphyrin IX. This Vibrio cholerae serotype O1 (strain ATCC 39315 / El Tor Inaba N16961) protein is Ferrochelatase.